Reading from the N-terminus, the 244-residue chain is 7-cyano-7-deazaguanine synthase (244 aa).

14-24 is a binding site for ATP; that stretch reads FSGGQDSATCV. Residues Cys-202, Cys-217, Cys-220, and Cys-223 each contribute to the Zn(2+) site.

This sequence belongs to the QueC family. Zn(2+) serves as cofactor.

The catalysed reaction is 7-carboxy-7-deazaguanine + NH4(+) + ATP = 7-cyano-7-deazaguanine + ADP + phosphate + H2O + H(+). It participates in purine metabolism; 7-cyano-7-deazaguanine biosynthesis. Catalyzes the ATP-dependent conversion of 7-carboxy-7-deazaguanine (CDG) to 7-cyano-7-deazaguanine (preQ(0)). The chain is 7-cyano-7-deazaguanine synthase from Burkholderia lata (strain ATCC 17760 / DSM 23089 / LMG 22485 / NCIMB 9086 / R18194 / 383).